Consider the following 432-residue polypeptide: Adenylosuccinate synthetase (432 aa).

Residues 12-18 and 40-42 each bind GTP; these read GDEGKGK and GHT. Aspartate 13 serves as the catalytic Proton acceptor. The Mg(2+) site is built by aspartate 13 and glycine 40. IMP is bound by residues 13-16, 38-41, threonine 132, arginine 146, glutamine 226, threonine 241, and arginine 305; these read DEGK and NAGH. The active-site Proton donor is histidine 41. A substrate-binding site is contributed by 301–307; sequence TVTGRKR. GTP-binding positions include arginine 307, 333–335, and 415–417; these read KLD and STS.

The protein belongs to the adenylosuccinate synthetase family. Homodimer. The cofactor is Mg(2+).

Its subcellular location is the cytoplasm. The catalysed reaction is IMP + L-aspartate + GTP = N(6)-(1,2-dicarboxyethyl)-AMP + GDP + phosphate + 2 H(+). Its pathway is purine metabolism; AMP biosynthesis via de novo pathway; AMP from IMP: step 1/2. Plays an important role in the de novo pathway of purine nucleotide biosynthesis. Catalyzes the first committed step in the biosynthesis of AMP from IMP. The chain is Adenylosuccinate synthetase from Rhizobium etli (strain ATCC 51251 / DSM 11541 / JCM 21823 / NBRC 15573 / CFN 42).